The following is a 212-amino-acid chain: Peptide methionine sulfoxide reductase MsrA (212 aa).

Residue C52 is part of the active site.

Belongs to the MsrA Met sulfoxide reductase family.

The catalysed reaction is L-methionyl-[protein] + [thioredoxin]-disulfide + H2O = L-methionyl-(S)-S-oxide-[protein] + [thioredoxin]-dithiol. The enzyme catalyses [thioredoxin]-disulfide + L-methionine + H2O = L-methionine (S)-S-oxide + [thioredoxin]-dithiol. Functionally, has an important function as a repair enzyme for proteins that have been inactivated by oxidation. Catalyzes the reversible oxidation-reduction of methionine sulfoxide in proteins to methionine. In Salmonella paratyphi B (strain ATCC BAA-1250 / SPB7), this protein is Peptide methionine sulfoxide reductase MsrA.